The chain runs to 250 residues: 2,3-bisphosphoglycerate-dependent phosphoglycerate mutase (250 aa).

Substrate is bound by residues 10–17 (RHGESEWN), 23–24 (TG), arginine 62, 89–92 (ERHY), lysine 100, 116–117 (RR), and 185–186 (GN). Histidine 11 (tele-phosphohistidine intermediate) is an active-site residue. Glutamate 89 functions as the Proton donor/acceptor in the catalytic mechanism.

It belongs to the phosphoglycerate mutase family. BPG-dependent PGAM subfamily. In terms of assembly, homodimer.

The catalysed reaction is (2R)-2-phosphoglycerate = (2R)-3-phosphoglycerate. It participates in carbohydrate degradation; glycolysis; pyruvate from D-glyceraldehyde 3-phosphate: step 3/5. Its function is as follows. Catalyzes the interconversion of 2-phosphoglycerate and 3-phosphoglycerate. The polypeptide is 2,3-bisphosphoglycerate-dependent phosphoglycerate mutase (Edwardsiella ictaluri (strain 93-146)).